The following is a 413-amino-acid chain: Ribosomal RNA large subunit methyltransferase G (413 aa).

The segment at 389-413 is disordered; the sequence is EAEVEQAFDTETPHPQSALYGKPKA.

This sequence belongs to the methyltransferase superfamily. RlmG family.

The protein localises to the cytoplasm. It carries out the reaction guanosine(1835) in 23S rRNA + S-adenosyl-L-methionine = N(2)-methylguanosine(1835) in 23S rRNA + S-adenosyl-L-homocysteine + H(+). Its function is as follows. Specifically methylates the guanine in position 1835 (m2G1835) of 23S rRNA. The sequence is that of Ribosomal RNA large subunit methyltransferase G from Shewanella pealeana (strain ATCC 700345 / ANG-SQ1).